The sequence spans 673 residues: Clotting factor G alpha subunit (673 aa).

The first 19 residues, 1 to 19, serve as a signal peptide directing secretion; the sequence is MLVLLCCVVLHVGVARICC. Residues 27–257 form the GH16 domain; the sequence is LVWSDEFTNG…YVRVYQDAST (231 aa). Glu137 (nucleophile) is an active-site residue. Residue Glu142 is the Proton donor of the active site. A glycan (N-linked (GlcNAc...) asparagine) is linked at Asn186. Residues 266–404 enclose the Ricin B-type lectin domain; that stretch reads LDGYYFVQNR…NQLSGQWKLI (139 aa). CBM6 domains are found at residues 411–533 and 549–671; these read KLIQ…IKIT and KLIQ…IRIT.

Belongs to the glycosyl hydrolase 16 family. As to quaternary structure, clotting factor G is a heterodimer composed of two non-covalently associated subunits, alpha and beta. In presence of (1-&gt;3)-beta-glucan, proteolytically cleaved into a 55kDa and a 17kDa forms. As to expression, expressed in hemocytes (at protein level).

Component of the heterodimer clotting factor G which may play a role in defense mechanisms against fungi. Initiates a (1-&gt;3)-beta-glucan-sensing clotting pathway whereby the alpha subunit binds to glucans containing (1-&gt;3)-beta linkages, which are components of the fungal cell wall, and the beta subunit catalyzes the activation of proclotting enzyme. This chain is Clotting factor G alpha subunit, found in Tachypleus tridentatus (Japanese horseshoe crab).